A 334-amino-acid chain; its full sequence is Lipoyl synthase (334 aa).

A disordered region spans residues 8-33 (LNNDTRPKVEAPARPRHPEKAHRPDT). Residues 12-33 (TRPKVEAPARPRHPEKAHRPDT) are compositionally biased toward basic and acidic residues. C68, C73, C79, C94, C98, C101, and S307 together coordinate [4Fe-4S] cluster. The Radical SAM core domain maps to 80-296 (WEKRHATFMI…ETTAYAKGFL (217 aa)).

It belongs to the radical SAM superfamily. Lipoyl synthase family. Requires [4Fe-4S] cluster as cofactor.

It is found in the cytoplasm. The enzyme catalyses [[Fe-S] cluster scaffold protein carrying a second [4Fe-4S](2+) cluster] + N(6)-octanoyl-L-lysyl-[protein] + 2 oxidized [2Fe-2S]-[ferredoxin] + 2 S-adenosyl-L-methionine + 4 H(+) = [[Fe-S] cluster scaffold protein] + N(6)-[(R)-dihydrolipoyl]-L-lysyl-[protein] + 4 Fe(3+) + 2 hydrogen sulfide + 2 5'-deoxyadenosine + 2 L-methionine + 2 reduced [2Fe-2S]-[ferredoxin]. The protein operates within protein modification; protein lipoylation via endogenous pathway; protein N(6)-(lipoyl)lysine from octanoyl-[acyl-carrier-protein]: step 2/2. Its function is as follows. Catalyzes the radical-mediated insertion of two sulfur atoms into the C-6 and C-8 positions of the octanoyl moiety bound to the lipoyl domains of lipoate-dependent enzymes, thereby converting the octanoylated domains into lipoylated derivatives. This is Lipoyl synthase from Methylorubrum populi (strain ATCC BAA-705 / NCIMB 13946 / BJ001) (Methylobacterium populi).